The chain runs to 87 residues: Small ribosomal subunit protein uS15 (87 aa).

Belongs to the universal ribosomal protein uS15 family. As to quaternary structure, part of the 30S ribosomal subunit. Forms a bridge to the 50S subunit in the 70S ribosome, contacting the 23S rRNA.

One of the primary rRNA binding proteins, it binds directly to 16S rRNA where it helps nucleate assembly of the platform of the 30S subunit by binding and bridging several RNA helices of the 16S rRNA. In terms of biological role, forms an intersubunit bridge (bridge B4) with the 23S rRNA of the 50S subunit in the ribosome. This Clostridium perfringens (strain ATCC 13124 / DSM 756 / JCM 1290 / NCIMB 6125 / NCTC 8237 / Type A) protein is Small ribosomal subunit protein uS15.